The chain runs to 110 residues: Small ribosomal subunit protein eS24 (110 aa).

The interval 91–110 (RNKVEEQAEEAEEAEAGAAE) is disordered. Residues 97–110 (QAEEAEEAEAGAAE) show a composition bias toward acidic residues.

It belongs to the eukaryotic ribosomal protein eS24 family.

The chain is Small ribosomal subunit protein eS24 from Archaeoglobus fulgidus (strain ATCC 49558 / DSM 4304 / JCM 9628 / NBRC 100126 / VC-16).